The primary structure comprises 61 residues: Small ribosomal subunit protein uS14 (61 aa).

Residues Cys24, Cys27, Cys40, and Cys43 each contribute to the Zn(2+) site.

Belongs to the universal ribosomal protein uS14 family. Zinc-binding uS14 subfamily. As to quaternary structure, part of the 30S ribosomal subunit. Contacts proteins S3 and S10. Requires Zn(2+) as cofactor.

Binds 16S rRNA, required for the assembly of 30S particles and may also be responsible for determining the conformation of the 16S rRNA at the A site. The chain is Small ribosomal subunit protein uS14 from Mycobacterium leprae (strain Br4923).